The primary structure comprises 329 residues: Malate dehydrogenase (329 aa).

An NAD(+)-binding site is contributed by 12 to 18; the sequence is GAAGQIG. Substrate contacts are provided by Arg93 and Arg99. NAD(+)-binding positions include Asn106, Gln113, and 130 to 132; that span reads VGN. Substrate contacts are provided by Asn132 and Arg166. His191 serves as the catalytic Proton acceptor.

It belongs to the LDH/MDH superfamily. MDH type 2 family.

The catalysed reaction is (S)-malate + NAD(+) = oxaloacetate + NADH + H(+). Functionally, catalyzes the reversible oxidation of malate to oxaloacetate. This is Malate dehydrogenase from Aromatoleum aromaticum (strain DSM 19018 / LMG 30748 / EbN1) (Azoarcus sp. (strain EbN1)).